The sequence spans 556 residues: Glutamine--tRNA ligase (556 aa).

A 'HIGH' region motif is present at residues 35–45 (PEPNGYLHIGH). Residues 36-38 (EPN) and 42-48 (HIGHAKS) each bind ATP. L-glutamine contacts are provided by Asp68 and Tyr213. Residues Thr232 and 262–263 (RL) contribute to the ATP site. The 'KMSKS' region signature appears at 269–273 (VTSKR).

This sequence belongs to the class-I aminoacyl-tRNA synthetase family. As to quaternary structure, monomer.

It is found in the cytoplasm. It catalyses the reaction tRNA(Gln) + L-glutamine + ATP = L-glutaminyl-tRNA(Gln) + AMP + diphosphate. The protein is Glutamine--tRNA ligase of Pseudomonas aeruginosa (strain LESB58).